The following is an 880-amino-acid chain: Interference hedgehog (880 aa).

The signal sequence occupies residues M1 to A20. Residues I21–P703 are Extracellular-facing. Ig-like C2-type domains follow at residues P37–L142, P154–S235, P251–V339, and P345–T432. 4 disulfides stabilise this stretch: C60-C126, C172-C219, C275-C323, and C366-C414. N-linked (GlcNAc...) asparagine glycosylation is found at N79, N102, and N208. The segment at P435–V468 is disordered. N447 and N467 each carry an N-linked (GlcNAc...) asparagine glycan. Fibronectin type-III domains are found at residues P462–G570 and V578–P673. Positions 498, 504, 506, and 544 each coordinate heparin. An N-linked (GlcNAc...) asparagine glycan is attached at N560. Residues L665–F699 form a disordered region. Polar residues predominate over residues G668 to F699. N696 is a glycosylation site (N-linked (GlcNAc...) asparagine). Residues I704 to L724 form a helical membrane-spanning segment. Residues C725–V880 lie on the Cytoplasmic side of the membrane. The interval Y797–V880 is disordered. Low complexity-rich tracts occupy residues R827 to N839 and S864 to V880.

The protein belongs to the immunoglobulin superfamily. IHOG family. As to quaternary structure, homodimer. Heterotetramer; 2 iHog chains bind 2 hh chains when facilitated by heparin, heparin is required to promote high-affinity interactions between hh and iHog.

The protein resides in the membrane. Functionally, mediates response to the active Hedgehog (Hh) protein signal in embryos, functioning upstream or at the level of patched (ptc). The polypeptide is Interference hedgehog (Drosophila ananassae (Fruit fly)).